The primary structure comprises 282 residues: Probable endonuclease 4 (282 aa).

Positions 69, 109, 145, 179, 182, 216, 229, 231, and 261 each coordinate Zn(2+).

It belongs to the AP endonuclease 2 family. Requires Zn(2+) as cofactor.

The catalysed reaction is Endonucleolytic cleavage to 5'-phosphooligonucleotide end-products.. Functionally, endonuclease IV plays a role in DNA repair. It cleaves phosphodiester bonds at apurinic or apyrimidinic (AP) sites, generating a 3'-hydroxyl group and a 5'-terminal sugar phosphate. The polypeptide is Probable endonuclease 4 (Chlorobium chlorochromatii (strain CaD3)).